We begin with the raw amino-acid sequence, 159 residues long: Transcription elongation factor GreA (159 aa).

Residues 2–77 (EENKEFLLTQ…LENMVRKAVI (76 aa)) are a coiled coil.

This sequence belongs to the GreA/GreB family.

Necessary for efficient RNA polymerase transcription elongation past template-encoded arresting sites. The arresting sites in DNA have the property of trapping a certain fraction of elongating RNA polymerases that pass through, resulting in locked ternary complexes. Cleavage of the nascent transcript by cleavage factors such as GreA or GreB allows the resumption of elongation from the new 3'terminus. GreA releases sequences of 2 to 3 nucleotides. This is Transcription elongation factor GreA from Clostridioides difficile (strain 630) (Peptoclostridium difficile).